The chain runs to 409 residues: Pentatricopeptide repeat-containing protein At1g01970 (409 aa).

PPR repeat units follow at residues 164–198 (NARD…GFLI), 199–233 (DQVT…GEPL), 234–268 (DYRS…EICA), 269–303 (GREV…GITP), 304–338 (DVKL…GIKA), and 339–373 (TDKC…SIML).

It belongs to the PPR family. P subfamily.

This chain is Pentatricopeptide repeat-containing protein At1g01970, found in Arabidopsis thaliana (Mouse-ear cress).